The following is a 370-amino-acid chain: Queuine tRNA-ribosyltransferase (370 aa).

D89 acts as the Proton acceptor in catalysis. Substrate contacts are provided by residues 89-93 (DSGGF), D143, Q185, and G212. The RNA binding stretch occupies residues 243 to 249 (GVGKPED). D262 serves as the catalytic Nucleophile. The segment at 267-271 (TRNAR) is RNA binding; important for wobble base 34 recognition. The Zn(2+) site is built by C300, C302, C305, and H331.

This sequence belongs to the queuine tRNA-ribosyltransferase family. In terms of assembly, homodimer. Within each dimer, one monomer is responsible for RNA recognition and catalysis, while the other monomer binds to the replacement base PreQ1. Requires Zn(2+) as cofactor.

The catalysed reaction is 7-aminomethyl-7-carbaguanine + guanosine(34) in tRNA = 7-aminomethyl-7-carbaguanosine(34) in tRNA + guanine. It participates in tRNA modification; tRNA-queuosine biosynthesis. Catalyzes the base-exchange of a guanine (G) residue with the queuine precursor 7-aminomethyl-7-deazaguanine (PreQ1) at position 34 (anticodon wobble position) in tRNAs with GU(N) anticodons (tRNA-Asp, -Asn, -His and -Tyr). Catalysis occurs through a double-displacement mechanism. The nucleophile active site attacks the C1' of nucleotide 34 to detach the guanine base from the RNA, forming a covalent enzyme-RNA intermediate. The proton acceptor active site deprotonates the incoming PreQ1, allowing a nucleophilic attack on the C1' of the ribose to form the product. After dissociation, two additional enzymatic reactions on the tRNA convert PreQ1 to queuine (Q), resulting in the hypermodified nucleoside queuosine (7-(((4,5-cis-dihydroxy-2-cyclopenten-1-yl)amino)methyl)-7-deazaguanosine). The polypeptide is Queuine tRNA-ribosyltransferase (Pseudoalteromonas atlantica (strain T6c / ATCC BAA-1087)).